A 447-amino-acid polypeptide reads, in one-letter code: Serine/threonine-protein phosphatase 2A 55 kDa regulatory subunit B gamma isoform (447 aa).

WD repeat units lie at residues 22–61 (TEADVISTVEFNHTGELLATGDKGGRVVIFQREPESKNAP), 87–128 (EIEE…KRPE), 171–209 (GHTYHINSISVNSDCETYMSADDLRINLWHLAITDRSFN), 220–260 (DLTE…LCDK), 279–317 (EIISSVSDVKFSHSGRYMLTRDYLTVKVWDLNMEARPIE), 334–375 (ESDC…DVTL), and 410–446 (DFTKKILHTAWHPAENIIAIAATNNLYIFQDKVNSDM).

It belongs to the phosphatase 2A regulatory subunit B family. PP2A consists of a common heterodimeric core enzyme, composed of a 36 kDa catalytic subunit (subunit C) and a 65 kDa constant regulatory subunit (PR65 or subunit A), that associates with a variety of regulatory subunits. Proteins that associate with the core dimer include three families of regulatory subunits B (the R2/B/PR55/B55, R3/B''/PR72/PR130/PR59 and R5/B'/B56 families), the 48 kDa variable regulatory subunit, viral proteins, and cell signaling molecules. Interacts with IER5.

Its function is as follows. The B regulatory subunit might modulate substrate selectivity and catalytic activity, and might also direct the localization of the catalytic enzyme to a particular subcellular compartment. The polypeptide is Serine/threonine-protein phosphatase 2A 55 kDa regulatory subunit B gamma isoform (Ppp2r2c) (Mus musculus (Mouse)).